The primary structure comprises 236 residues: Small ribosomal subunit protein uS2c (236 aa).

This sequence belongs to the universal ribosomal protein uS2 family.

The protein localises to the plastid. The protein resides in the chloroplast. The protein is Small ribosomal subunit protein uS2c (rps2) of Olimarabidopsis pumila (Dwarf rocket).